A 167-amino-acid polypeptide reads, in one-letter code: Endoribonuclease YbeY (167 aa).

H125, H129, and H135 together coordinate Zn(2+).

Belongs to the endoribonuclease YbeY family. It depends on Zn(2+) as a cofactor.

The protein resides in the cytoplasm. Functionally, single strand-specific metallo-endoribonuclease involved in late-stage 70S ribosome quality control and in maturation of the 3' terminus of the 16S rRNA. This is Endoribonuclease YbeY from Allorhizobium ampelinum (strain ATCC BAA-846 / DSM 112012 / S4) (Agrobacterium vitis (strain S4)).